The chain runs to 528 residues: Phosphoenolpyruvate carboxykinase (ATP) (528 aa).

Substrate is bound by residues Arg56, Tyr192, and Lys198. ATP is bound by residues Lys198, His217, and 233–241 (GLSGTGKTT). Mn(2+)-binding residues include Lys198 and His217. Asp254 is a binding site for Mn(2+). ATP is bound by residues Glu282, Arg319, and Thr444. A substrate-binding site is contributed by Arg319.

This sequence belongs to the phosphoenolpyruvate carboxykinase (ATP) family. It depends on Mn(2+) as a cofactor.

The protein localises to the cytoplasm. The enzyme catalyses oxaloacetate + ATP = phosphoenolpyruvate + ADP + CO2. The protein operates within carbohydrate biosynthesis; gluconeogenesis. Functionally, involved in the gluconeogenesis. Catalyzes the conversion of oxaloacetate (OAA) to phosphoenolpyruvate (PEP) through direct phosphoryl transfer between the nucleoside triphosphate and OAA. This Bacillus cereus (strain ATCC 10987 / NRS 248) protein is Phosphoenolpyruvate carboxykinase (ATP).